Consider the following 327-residue polypeptide: DNA-directed RNA polymerase subunit alpha (327 aa).

The segment at 1 to 233 (MVREKVKVST…NLFIPFLHVE (233 aa)) is alpha N-terminal domain (alpha-NTD). Residues 267–327 (LAFQYIFIDQ…KKILDILEKK (61 aa)) form an alpha C-terminal domain (alpha-CTD) region.

It belongs to the RNA polymerase alpha chain family. In plastids the minimal PEP RNA polymerase catalytic core is composed of four subunits: alpha, beta, beta', and beta''. When a (nuclear-encoded) sigma factor is associated with the core the holoenzyme is formed, which can initiate transcription.

It is found in the plastid. The protein localises to the chloroplast. The catalysed reaction is RNA(n) + a ribonucleoside 5'-triphosphate = RNA(n+1) + diphosphate. DNA-dependent RNA polymerase catalyzes the transcription of DNA into RNA using the four ribonucleoside triphosphates as substrates. The sequence is that of DNA-directed RNA polymerase subunit alpha from Draba nemorosa (Woodland whitlowgrass).